Reading from the N-terminus, the 163-residue chain is Probable histone H2A.4 (163 aa).

Disordered stretches follow at residues 1–30 (MEVG…VSRS) and 134–163 (SAAA…AAAA). A compositionally biased stretch (gly residues) spans 12 to 21 (GAGGRRGGGG). Residues 147-163 (KSPKKATTKSPKKAAAA) show a composition bias toward basic residues. 2 short sequence motifs (SPKK motif) span residues 148–151 (SPKK) and 156–159 (SPKK).

It belongs to the histone H2A family. As to quaternary structure, the nucleosome is a histone octamer containing two molecules each of H2A, H2B, H3 and H4 assembled in one H3-H4 heterotetramer and two H2A-H2B heterodimers. The octamer wraps approximately 147 bp of DNA.

The protein resides in the nucleus. Its subcellular location is the chromosome. Core component of nucleosome. Nucleosomes wrap and compact DNA into chromatin, limiting DNA accessibility to the cellular machineries which require DNA as a template. Histones thereby play a central role in transcription regulation, DNA repair, DNA replication and chromosomal stability. DNA accessibility is regulated via a complex set of post-translational modifications of histones, also called histone code, and nucleosome remodeling. In Oryza sativa subsp. indica (Rice), this protein is Probable histone H2A.4.